Here is a 324-residue protein sequence, read N- to C-terminus: tRNA dimethylallyltransferase (324 aa).

Position 17 to 24 (17 to 24 (GPTASGKT)) interacts with ATP. 19–24 (TASGKT) serves as a coordination point for substrate. 4 interaction with substrate tRNA regions span residues 42–45 (DSAL), 166–170 (QRIQR), 251–256 (RCVGYR), and 284–291 (KRQITWLR).

It belongs to the IPP transferase family. Monomer. Mg(2+) serves as cofactor.

The catalysed reaction is adenosine(37) in tRNA + dimethylallyl diphosphate = N(6)-dimethylallyladenosine(37) in tRNA + diphosphate. Catalyzes the transfer of a dimethylallyl group onto the adenine at position 37 in tRNAs that read codons beginning with uridine, leading to the formation of N6-(dimethylallyl)adenosine (i(6)A). The chain is tRNA dimethylallyltransferase from Burkholderia vietnamiensis (strain G4 / LMG 22486) (Burkholderia cepacia (strain R1808)).